The primary structure comprises 853 residues: DNA mismatch repair protein MutS (853 aa).

An ATP-binding site is contributed by 614-621; that stretch reads GPNMGGKS.

The protein belongs to the DNA mismatch repair MutS family.

Its function is as follows. This protein is involved in the repair of mismatches in DNA. It is possible that it carries out the mismatch recognition step. This protein has a weak ATPase activity. The chain is DNA mismatch repair protein MutS from Escherichia coli O1:K1 / APEC.